The following is a 1174-amino-acid chain: Probable DNA-directed RNA polymerase I subunit RPA2 (1174 aa).

A compositionally biased stretch (basic and acidic residues) spans 1-16 (MSFQTLERERTFKNPP). The disordered stretch occupies residues 1 to 23 (MSFQTLERERTFKNPPKDGTSFP). The C4-type zinc finger occupies 1089 to 1118 (CRDCGSIISIMSTISMNGVGSASEVRCRSC).

It belongs to the RNA polymerase beta chain family. In terms of assembly, component of the RNA polymerase I (Pol I) complex consisting of 14 subunits.

It localises to the nucleus. The protein localises to the nucleolus. The catalysed reaction is RNA(n) + a ribonucleoside 5'-triphosphate = RNA(n+1) + diphosphate. DNA-dependent RNA polymerase catalyzes the transcription of DNA into RNA using the four ribonucleoside triphosphates as substrates. Second largest core component of RNA polymerase I which synthesizes ribosomal RNA precursors. Proposed to contribute to the polymerase catalytic activity and forms the polymerase active center together with the largest subunit. Pol I is composed of mobile elements and RPA2 is part of the core element with the central large cleft and probably a clamp element that moves to open and close the cleft. The chain is Probable DNA-directed RNA polymerase I subunit RPA2 (rpa2) from Schizosaccharomyces pombe (strain 972 / ATCC 24843) (Fission yeast).